Reading from the N-terminus, the 369-residue chain is UDP-N-acetylglucosamine--N-acetylmuramyl-(pentapeptide) pyrophosphoryl-undecaprenol N-acetylglucosamine transferase (369 aa).

UDP-N-acetyl-alpha-D-glucosamine-binding positions include 15–17 (TGG), N126, R169, S197, and Q299.

This sequence belongs to the glycosyltransferase 28 family. MurG subfamily.

It is found in the cell inner membrane. The catalysed reaction is di-trans,octa-cis-undecaprenyl diphospho-N-acetyl-alpha-D-muramoyl-L-alanyl-D-glutamyl-meso-2,6-diaminopimeloyl-D-alanyl-D-alanine + UDP-N-acetyl-alpha-D-glucosamine = di-trans,octa-cis-undecaprenyl diphospho-[N-acetyl-alpha-D-glucosaminyl-(1-&gt;4)]-N-acetyl-alpha-D-muramoyl-L-alanyl-D-glutamyl-meso-2,6-diaminopimeloyl-D-alanyl-D-alanine + UDP + H(+). The protein operates within cell wall biogenesis; peptidoglycan biosynthesis. Its function is as follows. Cell wall formation. Catalyzes the transfer of a GlcNAc subunit on undecaprenyl-pyrophosphoryl-MurNAc-pentapeptide (lipid intermediate I) to form undecaprenyl-pyrophosphoryl-MurNAc-(pentapeptide)GlcNAc (lipid intermediate II). This Methylorubrum extorquens (strain CM4 / NCIMB 13688) (Methylobacterium extorquens) protein is UDP-N-acetylglucosamine--N-acetylmuramyl-(pentapeptide) pyrophosphoryl-undecaprenol N-acetylglucosamine transferase.